The chain runs to 527 residues: Catalase (527 aa).

A compositionally biased stretch (basic and acidic residues) spans 1 to 22; that stretch reads MADSRDPASDQMKQWKEQRAPQ. The interval 1–34 is disordered; sequence MADSRDPASDQMKQWKEQRAPQKPDVLTTGGGNP. Residue Ala-2 is modified to N-acetylalanine. Ser-9 bears the Phosphoserine mark. Lys-13 carries the N6-succinyllysine modification. Active-site residues include His-75 and Asn-148. NADP(+) is bound by residues His-194, Ser-201, Arg-203, and Asn-213. The residue at position 221 (Lys-221) is an N6-succinyllysine. Position 233 is an N6-acetyllysine (Lys-233). Lys-237, Trp-303, His-305, and Lys-306 together coordinate NADP(+). Lys-306 is modified (N6-acetyllysine; alternate). The residue at position 306 (Lys-306) is an N6-succinyllysine; alternate. Tyr-358 contributes to the heme binding site. Ser-417 and Ser-434 each carry phosphoserine. An N6-acetyllysine; alternate mark is found at Lys-449 and Lys-480. An N6-succinyllysine; alternate mark is found at Lys-449 and Lys-480. Residue Thr-511 is modified to Phosphothreonine. The residue at position 517 (Ser-517) is a Phosphoserine. Lys-522 bears the N6-succinyllysine mark. Residues 524-527 carry the Microbody targeting signal; atypical motif; the sequence is KANL.

It belongs to the catalase family. As to quaternary structure, homotetramer. Interacts (via microbody targeting signal) with PEX5, monomeric form interacts with PEX5, leading to its translocation into peroxisomes. Heme serves as cofactor. NADP(+) is required as a cofactor. As to expression, expressed in renal proximal tubules (at protein level).

Its subcellular location is the peroxisome matrix. The catalysed reaction is 2 H2O2 = O2 + 2 H2O. Its function is as follows. Catalyzes the degradation of hydrogen peroxide (H(2)O(2)) generated by peroxisomal oxidases to water and oxygen, thereby protecting cells from the toxic effects of hydrogen peroxide. Promotes growth of cells including T-cells, B-cells, myeloid leukemia cells, melanoma cells, mastocytoma cells and normal and transformed fibroblast cells. This chain is Catalase (Cat), found in Rattus norvegicus (Rat).